The primary structure comprises 471 residues: Alpha-galactosidase 1 (471 aa).

The N-terminal stretch at 1-18 (MFAFYFLTACISLKGVFG) is a signal peptide. A disulfide bridge links Cys-42 with Cys-74. Residues Asp-72 and Asp-73 each contribute to the substrate site. An N-linked (GlcNAc...) asparagine glycan is attached at Asn-105. A disulfide bond links Cys-121 and Cys-151. Residue Lys-147 participates in substrate binding. The Nucleophile role is filled by Asp-149. A glycan (N-linked (GlcNAc...) asparagine) is linked at Asn-175. A substrate-binding site is contributed by Arg-205. Residue Asp-209 is the Proton donor of the active site. Intrachain disulfides connect Cys-221–Cys-237 and Cys-223–Cys-230. Gln-251 provides a ligand contact to substrate. Asn-270, Asn-370, Asn-403, Asn-413, Asn-422, Asn-435, and Asn-454 each carry an N-linked (GlcNAc...) asparagine glycan.

The protein belongs to the glycosyl hydrolase 27 family. Homotetramer.

The protein resides in the secreted. The enzyme catalyses Hydrolysis of terminal, non-reducing alpha-D-galactose residues in alpha-D-galactosides, including galactose oligosaccharides, galactomannans and galactolipids.. This Saccharomyces cerevisiae (Baker's yeast) protein is Alpha-galactosidase 1 (MEL1).